A 318-amino-acid chain; its full sequence is 4-hydroxy-3-methylbut-2-enyl diphosphate reductase (318 aa).

Cys-12 is a [4Fe-4S] cluster binding site. The (2E)-4-hydroxy-3-methylbut-2-enyl diphosphate site is built by His-41 and His-74. Dimethylallyl diphosphate-binding residues include His-41 and His-74. Residues His-41 and His-74 each contribute to the isopentenyl diphosphate site. Cys-96 serves as a coordination point for [4Fe-4S] cluster. His-124 serves as a coordination point for (2E)-4-hydroxy-3-methylbut-2-enyl diphosphate. Position 124 (His-124) interacts with dimethylallyl diphosphate. Isopentenyl diphosphate is bound at residue His-124. Glu-126 (proton donor) is an active-site residue. A (2E)-4-hydroxy-3-methylbut-2-enyl diphosphate-binding site is contributed by Thr-167. Cys-197 lines the [4Fe-4S] cluster pocket. (2E)-4-hydroxy-3-methylbut-2-enyl diphosphate-binding residues include Ser-225, Ser-226, Asn-227, and Ser-269. Residues Ser-225, Ser-226, Asn-227, and Ser-269 each contribute to the dimethylallyl diphosphate site. 4 residues coordinate isopentenyl diphosphate: Ser-225, Ser-226, Asn-227, and Ser-269.

It belongs to the IspH family. [4Fe-4S] cluster is required as a cofactor.

The catalysed reaction is isopentenyl diphosphate + 2 oxidized [2Fe-2S]-[ferredoxin] + H2O = (2E)-4-hydroxy-3-methylbut-2-enyl diphosphate + 2 reduced [2Fe-2S]-[ferredoxin] + 2 H(+). The enzyme catalyses dimethylallyl diphosphate + 2 oxidized [2Fe-2S]-[ferredoxin] + H2O = (2E)-4-hydroxy-3-methylbut-2-enyl diphosphate + 2 reduced [2Fe-2S]-[ferredoxin] + 2 H(+). Its pathway is isoprenoid biosynthesis; dimethylallyl diphosphate biosynthesis; dimethylallyl diphosphate from (2E)-4-hydroxy-3-methylbutenyl diphosphate: step 1/1. It participates in isoprenoid biosynthesis; isopentenyl diphosphate biosynthesis via DXP pathway; isopentenyl diphosphate from 1-deoxy-D-xylulose 5-phosphate: step 6/6. Its function is as follows. Catalyzes the conversion of 1-hydroxy-2-methyl-2-(E)-butenyl 4-diphosphate (HMBPP) into a mixture of isopentenyl diphosphate (IPP) and dimethylallyl diphosphate (DMAPP). Acts in the terminal step of the DOXP/MEP pathway for isoprenoid precursor biosynthesis. The polypeptide is 4-hydroxy-3-methylbut-2-enyl diphosphate reductase (Francisella tularensis subsp. holarctica (strain LVS)).